The chain runs to 365 residues: Putative F-box protein At1g31000 (365 aa).

The F-box domain maps to 15 to 62 (NDSDSVRIDIVIEIVKRLPLKDVSRFLLVSKLWSEIIRSPYFIRSFPF).

The protein is Putative F-box protein At1g31000 of Arabidopsis thaliana (Mouse-ear cress).